A 207-amino-acid polypeptide reads, in one-letter code: Small ribosomal subunit protein uS4 (207 aa).

Positions 30–51 (DKSKFDSKPGQHGRTSGARTSD) are disordered. An S4 RNA-binding domain is found at 97–157 (SRLDNVVYRM…EKSKKQGRIA (61 aa)).

The protein belongs to the universal ribosomal protein uS4 family. In terms of assembly, part of the 30S ribosomal subunit. Contacts protein S5. The interaction surface between S4 and S5 is involved in control of translational fidelity.

Functionally, one of the primary rRNA binding proteins, it binds directly to 16S rRNA where it nucleates assembly of the body of the 30S subunit. Its function is as follows. With S5 and S12 plays an important role in translational accuracy. The chain is Small ribosomal subunit protein uS4 from Verminephrobacter eiseniae (strain EF01-2).